Reading from the N-terminus, the 239-residue chain is Aspartate/glutamate leucyltransferase (239 aa).

Belongs to the R-transferase family. Bpt subfamily.

The protein localises to the cytoplasm. The catalysed reaction is N-terminal L-glutamyl-[protein] + L-leucyl-tRNA(Leu) = N-terminal L-leucyl-L-glutamyl-[protein] + tRNA(Leu) + H(+). It carries out the reaction N-terminal L-aspartyl-[protein] + L-leucyl-tRNA(Leu) = N-terminal L-leucyl-L-aspartyl-[protein] + tRNA(Leu) + H(+). In terms of biological role, functions in the N-end rule pathway of protein degradation where it conjugates Leu from its aminoacyl-tRNA to the N-termini of proteins containing an N-terminal aspartate or glutamate. This Campylobacter jejuni subsp. jejuni serotype O:2 (strain ATCC 700819 / NCTC 11168) protein is Aspartate/glutamate leucyltransferase.